The sequence spans 110 residues: Iron-sulfur cluster assembly protein CyaY (110 aa).

This sequence belongs to the frataxin family.

In terms of biological role, involved in iron-sulfur (Fe-S) cluster assembly. May act as a regulator of Fe-S biogenesis. The polypeptide is Iron-sulfur cluster assembly protein CyaY (Pseudomonas putida (strain GB-1)).